A 241-amino-acid polypeptide reads, in one-letter code: tRNA pseudouridine synthase A (241 aa).

Asp51 serves as the catalytic Nucleophile. Tyr110 provides a ligand contact to substrate.

Belongs to the tRNA pseudouridine synthase TruA family. Homodimer.

The catalysed reaction is uridine(38/39/40) in tRNA = pseudouridine(38/39/40) in tRNA. Formation of pseudouridine at positions 38, 39 and 40 in the anticodon stem and loop of transfer RNAs. The polypeptide is tRNA pseudouridine synthase A (Campylobacter jejuni subsp. jejuni serotype O:23/36 (strain 81-176)).